We begin with the raw amino-acid sequence, 550 residues long: Tether containing UBX domain for GLUT4 (550 aa).

An N-acetylalanine modification is found at Ala2. A disordered region spans residues 185–320 (AVRSKAPGSP…EPPVDRDPVV (136 aa)). Position 193 is a phosphoserine (Ser193). Residues 193–206 (SPVSSLSADQASSS) show a composition bias toward low complexity. Positions 217-226 (SRGDLNHEGD) are enriched in basic and acidic residues. Polar residues predominate over residues 242-252 (DAQTKQSTSEP). The segment at 313-376 (PVDRDPVVYH…LVTKAFREAQ (64 aa)) is interaction with GLUT4. In terms of domain architecture, UBX spans 382–458 (ERYPKVALRV…NLFPAALVHF (77 aa)). Residue Ser496 is modified to Phosphoserine. The segment at 496-550 (SPPLLPAPDPVSLESEPIAEDGALGPPEPIQGTAQPVKRSLGKVPKWLKLPASKR) is disordered.

In terms of assembly, interacts with VCP. Interacts with VCPKMT. Interacts with GLUT4. As to expression, ubiquitous.

Its subcellular location is the endomembrane system. The protein resides in the endoplasmic reticulum-Golgi intermediate compartment membrane. It localises to the cytoplasm. The protein localises to the nucleus. In terms of biological role, enhances VCP methylation catalyzed by VCPKMT. Tethering protein that sequesters GLUT4-containing vesicles in the cytoplasm in the absence of insulin. Modulates the amount of GLUT4 that is available at the cell surface. The protein is Tether containing UBX domain for GLUT4 (Aspscr1) of Mus musculus (Mouse).